Reading from the N-terminus, the 171-residue chain is Translation initiation factor IF-3 (171 aa).

Belongs to the IF-3 family. As to quaternary structure, monomer.

Its subcellular location is the cytoplasm. IF-3 binds to the 30S ribosomal subunit and shifts the equilibrium between 70S ribosomes and their 50S and 30S subunits in favor of the free subunits, thus enhancing the availability of 30S subunits on which protein synthesis initiation begins. In Halalkalibacterium halodurans (strain ATCC BAA-125 / DSM 18197 / FERM 7344 / JCM 9153 / C-125) (Bacillus halodurans), this protein is Translation initiation factor IF-3.